A 473-amino-acid polypeptide reads, in one-letter code: Cysteine--tRNA ligase (473 aa).

C33 is a Zn(2+) binding site. Residues 35–45 (ATVQGQPHIGH) carry the 'HIGH' region motif. 3 residues coordinate Zn(2+): C211, H236, and E240. The 'KMSKS' region motif lies at 267–271 (KMSKS). K270 serves as a coordination point for ATP.

Belongs to the class-I aminoacyl-tRNA synthetase family. In terms of assembly, monomer. It depends on Zn(2+) as a cofactor.

The protein resides in the cytoplasm. The enzyme catalyses tRNA(Cys) + L-cysteine + ATP = L-cysteinyl-tRNA(Cys) + AMP + diphosphate. The polypeptide is Cysteine--tRNA ligase (Mycobacterium leprae (strain Br4923)).